The following is a 588-amino-acid chain: Ufm1-specific protease (588 aa).

Active-site residues include cysteine 420, aspartate 544, and histidine 546.

The protein belongs to the peptidase C78 family. In terms of assembly, interacts with odr-4.

The protein localises to the endoplasmic reticulum membrane. It is found in the cytoplasm. It localises to the perinuclear region. Functionally, thiol protease which recognizes and hydrolyzes the peptide bond at the C-terminal Gly of ufm-1, a ubiquitin-like modifier protein bound to a number of target proteins. Required, with oct-4, for the localization of a subset of 7 transmembrane domain odorant receptors, including odr-10, to the cilia of olfactory neurons AWA and AWC. Operates in aggregation behavior, and responses to oxygen levels. The sequence is that of Ufm1-specific protease from Caenorhabditis briggsae.